Consider the following 208-residue polypeptide: Large ribosomal subunit protein uL3 (208 aa).

The tract at residues 117–147 is disordered; that stretch reads FQGVIKRHGQSRGPMAHGSRYHRRPGSMGPV.

This sequence belongs to the universal ribosomal protein uL3 family. Part of the 50S ribosomal subunit. Forms a cluster with proteins L14 and L19.

In terms of biological role, one of the primary rRNA binding proteins, it binds directly near the 3'-end of the 23S rRNA, where it nucleates assembly of the 50S subunit. The protein is Large ribosomal subunit protein uL3 of Streptococcus equi subsp. zooepidemicus (strain H70).